We begin with the raw amino-acid sequence, 198 residues long: Protein GrpE (198 aa).

Over residues 1–27 (MEERNEQVVEETKEAQTEEATIEKNSE) the composition is skewed to basic and acidic residues. The tract at residues 1–39 (MEERNEQVVEETKEAQTEEATIEKNSEESVTEEATEETV) is disordered. Positions 29–39 (SVTEEATEETV) are enriched in acidic residues.

The protein belongs to the GrpE family. In terms of assembly, homodimer.

The protein resides in the cytoplasm. In terms of biological role, participates actively in the response to hyperosmotic and heat shock by preventing the aggregation of stress-denatured proteins, in association with DnaK and GrpE. It is the nucleotide exchange factor for DnaK and may function as a thermosensor. Unfolded proteins bind initially to DnaJ; upon interaction with the DnaJ-bound protein, DnaK hydrolyzes its bound ATP, resulting in the formation of a stable complex. GrpE releases ADP from DnaK; ATP binding to DnaK triggers the release of the substrate protein, thus completing the reaction cycle. Several rounds of ATP-dependent interactions between DnaJ, DnaK and GrpE are required for fully efficient folding. The sequence is that of Protein GrpE from Bacillus cytotoxicus (strain DSM 22905 / CIP 110041 / 391-98 / NVH 391-98).